We begin with the raw amino-acid sequence, 490 residues long: Betaine aldehyde dehydrogenase (490 aa).

3 residues coordinate K(+): Ser26, Ile27, and Asp93. Residue 150-152 (GAW) participates in NAD(+) binding. Lys162 functions as the Charge relay system in the catalytic mechanism. Residues 176–179 (KPSE) and 230–233 (GVET) contribute to the NAD(+) site. A K(+)-binding site is contributed by Leu246. The active-site Proton acceptor is Glu252. NAD(+) is bound by residues Gly254, Cys286, and Glu387. Cys286 acts as the Nucleophile in catalysis. A Cysteine sulfenic acid (-SOH) modification is found at Cys286. Residues Lys457 and Gly460 each coordinate K(+). The active-site Charge relay system is Glu464.

Belongs to the aldehyde dehydrogenase family. Dimer of dimers. Requires K(+) as cofactor.

The catalysed reaction is betaine aldehyde + NAD(+) + H2O = glycine betaine + NADH + 2 H(+). Its pathway is amine and polyamine biosynthesis; betaine biosynthesis via choline pathway; betaine from betaine aldehyde: step 1/1. Involved in the biosynthesis of the osmoprotectant glycine betaine. Catalyzes the irreversible oxidation of betaine aldehyde to the corresponding acid. This chain is Betaine aldehyde dehydrogenase, found in Acinetobacter baumannii (strain ACICU).